Here is an 89-residue protein sequence, read N- to C-terminus: Elongation factor 1-beta (89 aa).

This sequence belongs to the EF-1-beta/EF-1-delta family.

Promotes the exchange of GDP for GTP in EF-1-alpha/GDP, thus allowing the regeneration of EF-1-alpha/GTP that could then be used to form the ternary complex EF-1-alpha/GTP/AAtRNA. This chain is Elongation factor 1-beta, found in Methanococcus aeolicus (strain ATCC BAA-1280 / DSM 17508 / OCM 812 / Nankai-3).